A 246-amino-acid chain; its full sequence is Ribosomal RNA large subunit methyltransferase E (246 aa).

S-adenosyl-L-methionine is bound by residues Gly81, Trp83, Asp104, Asp120, and Asp144. Residue Lys184 is the Proton acceptor of the active site.

Belongs to the class I-like SAM-binding methyltransferase superfamily. RNA methyltransferase RlmE family.

The protein resides in the cytoplasm. It carries out the reaction uridine(2552) in 23S rRNA + S-adenosyl-L-methionine = 2'-O-methyluridine(2552) in 23S rRNA + S-adenosyl-L-homocysteine + H(+). In terms of biological role, specifically methylates the uridine in position 2552 of 23S rRNA at the 2'-O position of the ribose in the fully assembled 50S ribosomal subunit. In Agrobacterium fabrum (strain C58 / ATCC 33970) (Agrobacterium tumefaciens (strain C58)), this protein is Ribosomal RNA large subunit methyltransferase E.